The following is a 218-amino-acid chain: 3-dehydroquinate dehydratase (218 aa).

3-dehydroquinate-binding positions include 29–31 (EFR) and arginine 56. The Proton donor/acceptor role is filled by histidine 116. Lysine 142 acts as the Schiff-base intermediate with substrate in catalysis. Arginine 180, serine 200, and glutamine 204 together coordinate 3-dehydroquinate.

Belongs to the type-I 3-dehydroquinase family. In terms of assembly, homodimer.

The catalysed reaction is 3-dehydroquinate = 3-dehydroshikimate + H2O. The protein operates within metabolic intermediate biosynthesis; chorismate biosynthesis; chorismate from D-erythrose 4-phosphate and phosphoenolpyruvate: step 3/7. Its function is as follows. Involved in the third step of the chorismate pathway, which leads to the biosynthesis of aromatic amino acids. Catalyzes the cis-dehydration of 3-dehydroquinate (DHQ) and introduces the first double bond of the aromatic ring to yield 3-dehydroshikimate. This Methanococcus maripaludis (strain C6 / ATCC BAA-1332) protein is 3-dehydroquinate dehydratase.